We begin with the raw amino-acid sequence, 514 residues long: MALMQELYSTPASRLDSFVAQWLQPHREWKEEVLDAVRTVEEFLRQEHFQGKRGLDQDVRVLKVVKVGSFGNGTVLRSTREVELVAFLSCFHSFQEAAKHHKDVLRLIWKTMWQSQDLLDLGLEDLRMEQRVPDALVFTIQTRGTAEPITVTIVPAYRALGPSLPNSQPPPEVYVSLIKACGGPGNFCPSFSELQRNFVKHRPTKLKSLLRLVKHWYQQYVKARSPRANLPPLYALELLTIYAWEMGTEEDENFMLDEGFTTVMDLLLEYEVICIYWTKYYTLHNAIIEDCVRKQLKKERPIILDPADPTLNVAEGYRWDIVAQRASQCLKQDCCYDNRENPISSWNVKRARDIHLTVEQRGYPDFNLIVNPYEPIRKVKEKIRRTRGYSGLQRLSFQVPGSERQLLSSRCSLAKYGIFSHTHIYLLETIPSEIQVFVKNPDGGSYAYAINPNSFILGLKQQIEDQQGLPKKQQQLEFQGQVLQDWLGLGIYGIQDSDTLILSKKKGEALFPAS.

An N-acetylalanine modification is found at Ala-2. Ubiquitin-like domains are found at residues 354–433 and 434–509; these read IHLT…IPSE and IQVF…KGEA.

The protein belongs to the 2-5A synthase family. As to quaternary structure, specifically interacts with the ligand binding domain of the thyroid receptor (TR). TRIP14 does not require the presence of thyroid hormone for its interaction. Binds MBD1. Expressed in most tissues, with the highest levels in primary blood Leukocytes and other hematopoietic system tissues, colon, stomach and to some extent in testis.

Its subcellular location is the nucleus. It is found in the nucleolus. The protein localises to the cytoplasm. Its function is as follows. Does not have 2'-5'-OAS activity, but can bind double-stranded RNA. Displays antiviral activity against encephalomyocarditis virus (EMCV) and hepatitis C virus (HCV) via an alternative antiviral pathway independent of RNase L. This Homo sapiens (Human) protein is 2'-5'-oligoadenylate synthase-like protein (OASL).